The primary structure comprises 94 residues: UPF0337 protein NE2439 (94 aa).

A disordered region spans residues 74–94; sequence KNVGEAVSSRQKSVKKRSLYT. Residues 85-94 are compositionally biased toward basic residues; sequence KSVKKRSLYT.

This sequence belongs to the UPF0337 (CsbD) family.

The protein is UPF0337 protein NE2439 of Nitrosomonas europaea (strain ATCC 19718 / CIP 103999 / KCTC 2705 / NBRC 14298).